Reading from the N-terminus, the 172-residue chain is Peptide deformylase-like (172 aa).

Glu-134 is an active-site residue.

Belongs to the polypeptide deformylase family.

The chain is Peptide deformylase-like from Rhizobium meliloti (strain 1021) (Ensifer meliloti).